The following is a 316-amino-acid chain: Polyprenyl transferase dpchC (316 aa).

Helical transmembrane passes span 24-44 (PLFTTFAGLWSTLLAGGAKMA), 60-80 (ALCFVASYLFCGAGMVWNDWI), 105-125 (EAMVWMVLQAALSWGVLEVML), 154-174 (MLGIYPQYILAFTIAWPAVIG), 192-212 (CLPLCTMVFFWTIYLNTAYSY), 234-254 (IHLLLVALVSPILVCLPIYLF), 258-278 (SLWLWLSWMGVWTASLAQQLV), and 296-316 (FILGIWTILACVVQVFLTGSA).

It belongs to the UbiA prenyltransferase family. It depends on Mg(2+) as a cofactor.

It localises to the membrane. Its pathway is secondary metabolite biosynthesis; terpenoid biosynthesis. Its function is as follows. Polyprenyl transferase; part of the gene cluster that mediates the biosynthesis of the diterpenoid pyrones higginsianins A and B. The first step of the pathway is the synthesis of the alpha-pyrone moiety by the polyketide synthase dpchA via condensation of one acetyl-CoA starter unit with 3 malonyl-CoA units and 2 methylations. The alpha-pyrone is then combined with geranylgeranyl pyrophosphate (GGPP) formed by the GGPP synthase dpchD through the action of the prenyltransferase dpchC to yield a linear alpha-pyrone diterpenoid. Subsequent steps in the diterpenoid pyrone biosynthetic pathway involve the decalin core formation, which is initiated by the epoxidation of the C10-C11 olefin by the FAD-dependent oxidoreductase dpchE, and is followed by a cyclization cascade catalyzed by the terpene cyclase dpchB. The short chain dehydrogenase/reductase dpchG then oxidizes the 8S hydroxy group to a ketone and the short chain dehydrogenase/reductase dpchH reduces the ketone to the 8R hydroxy group to yield higginsianin B. Finally, the FAD-dependent oxidoreductase dpchF converts higginsianin B into higginsianin A. The sequence is that of Polyprenyl transferase dpchC from Colletotrichum higginsianum (strain IMI 349063) (Crucifer anthracnose fungus).